The primary structure comprises 276 residues: MIDTAMARLNEGTIVIYALSVLFYFIDFLQHNRKAGKMAFWLLSIVWTLQTVYLAYFMWVTGRFPVLNVTEALYFYAWVLVTLSLVLTKLLRVDFIVFFTNVIGFSMIAIHTFSPTEQQSAAFSGQLVSELLVIHITMAILSYGAFSLSFVFSVLYMFQYHLLKKKKWGKWLLRIEDLSKLDYMAYVLNVIGVPMLLLSLILGVIWAYVSLETLYWFDAKVLGSFVVLLLYSYYLYIRLIKELQGKVAALWNTACFLVLMINYFLLGSLSQFHWFS.

The next 8 helical transmembrane spans lie at 9–29, 40–60, 66–86, 93–113, 132–152, 187–207, 217–237, and 247–267; these read LNEG…IDFL, FWLL…FMWV, VLNV…LSLV, VDFI…IHTF, LVIH…SFVF, VLNV…VIWA, FDAK…YLYI, and VAAL…FLLG.

The protein to M.leprae U1620K.

It localises to the cell membrane. Functionally, required for HemL synthesis. The protein is Protein HemX (hemX) of Bacillus subtilis (strain 168).